The chain runs to 311 residues: Beta-ketoacyl-[acyl-carrier-protein] synthase III (311 aa).

Active-site residues include Cys-114 and His-238. The segment at 239-243 is ACP-binding; sequence QANIR. The active site involves Asn-268.

The protein belongs to the thiolase-like superfamily. FabH family. As to quaternary structure, homodimer.

It is found in the cytoplasm. It catalyses the reaction malonyl-[ACP] + acetyl-CoA + H(+) = 3-oxobutanoyl-[ACP] + CO2 + CoA. It participates in lipid metabolism; fatty acid biosynthesis. Functionally, catalyzes the condensation reaction of fatty acid synthesis by the addition to an acyl acceptor of two carbons from malonyl-ACP. Catalyzes the first condensation reaction which initiates fatty acid synthesis and may therefore play a role in governing the total rate of fatty acid production. Possesses both acetoacetyl-ACP synthase and acetyl transacylase activities. Its substrate specificity determines the biosynthesis of branched-chain and/or straight-chain of fatty acids. The protein is Beta-ketoacyl-[acyl-carrier-protein] synthase III of Neorickettsia sennetsu (strain ATCC VR-367 / Miyayama) (Ehrlichia sennetsu).